Consider the following 287-residue polypeptide: MKRIFLLIATNLAVLLVASIVMSILGVNTSTMGGLLVFAAIFGFGGAFISLAISKWMAKKTMGCEVITTPRDSTERWLLETVARQAQQAGIKMPEVAIYQSPEMNAFATGPSKDNSLVAVSTGLLYGMSQDEVEGVLAHEVSHVANGDMVTLTLIQGVVNTFVIFAARVVAGIINNFVSSNDEEGEGLGMFAYMAVVFVLDMLFGILASIIVAYFSRIREYRADEGAARLAGKHKMIAALERLRQGPESSAMPAQMSAFGINGKRSMAELMMSHPPLEKRIAALQTR.

A run of 2 helical transmembrane segments spans residues Ile-4–Ile-24 and Gly-33–Ile-53. His-139 is a Zn(2+) binding site. Glu-140 is an active-site residue. Residue His-143 participates in Zn(2+) binding. A run of 2 helical transmembrane segments spans residues Leu-154–Ile-174 and Ala-195–Phe-215. Glu-220 is a binding site for Zn(2+).

The protein belongs to the peptidase M48B family. Zn(2+) is required as a cofactor.

It localises to the cell inner membrane. The sequence is that of Protease HtpX from Shewanella sp. (strain MR-4).